The sequence spans 438 residues: Asparagine--tRNA ligase (438 aa).

It belongs to the class-II aminoacyl-tRNA synthetase family. Homodimer.

The protein resides in the cytoplasm. It catalyses the reaction tRNA(Asn) + L-asparagine + ATP = L-asparaginyl-tRNA(Asn) + AMP + diphosphate + H(+). In Thermus thermophilus (strain ATCC 27634 / DSM 579 / HB8), this protein is Asparagine--tRNA ligase.